Here is a 464-residue protein sequence, read N- to C-terminus: DNA primase DnaG (464 aa).

A Toprim domain is found at 200–274 (DSIIVVEGRA…DVDYVARAPE (75 aa)). Residues E206, D248, and D250 each coordinate Mg(2+). Over residues 322-332 (NGREEKVREVK) the composition is skewed to basic and acidic residues. The segment at 322-359 (NGREEKVREVKPPAPAPAPAPAPKPIEKPEPKEREEKI) is disordered. Positions 333 to 345 (PPAPAPAPAPAPK) are enriched in pro residues. The segment covering 346 to 359 (PIEKPEPKEREEKI) has biased composition (basic and acidic residues).

This sequence belongs to the archaeal DnaG primase family. As to quaternary structure, forms a ternary complex with MCM helicase and DNA. Component of the archaeal exosome complex. It depends on Mg(2+) as a cofactor.

It catalyses the reaction ssDNA + n NTP = ssDNA/pppN(pN)n-1 hybrid + (n-1) diphosphate.. RNA polymerase that catalyzes the synthesis of short RNA molecules used as primers for DNA polymerase during DNA replication. Also part of the exosome, which is a complex involved in RNA degradation. Acts as a poly(A)-binding protein that enhances the interaction between heteromeric, adenine-rich transcripts and the exosome. This chain is DNA primase DnaG, found in Thermococcus onnurineus (strain NA1).